The sequence spans 283 residues: Bis(5'-nucleosyl)-tetraphosphatase, symmetrical (283 aa).

This sequence belongs to the Ap4A hydrolase family.

It catalyses the reaction P(1),P(4)-bis(5'-adenosyl) tetraphosphate + H2O = 2 ADP + 2 H(+). In terms of biological role, hydrolyzes diadenosine 5',5'''-P1,P4-tetraphosphate to yield ADP. The protein is Bis(5'-nucleosyl)-tetraphosphatase, symmetrical of Serratia proteamaculans (strain 568).